The following is a 141-amino-acid chain: MAPKVFRQYWDIPDGTDCHRKAYSTTSIASVAGLTAAAYRVTLNPPGTFLEGVAKVGQYTFTAAAVGAVFGLTTCISAHVREKPDDPLNYFLGGCAGGLTLGARTHNYGIGAAACVYFGIAASLVKMGRLEGWEVFAKPKV.

An N-acetylalanine modification is found at Ala2. The next 2 helical transmembrane spans lie at Lys21–Leu43 and Gln58–Val80.

Belongs to the complex I NDUFA11 subunit family. Complex I is composed of 45 different subunits.

It localises to the mitochondrion inner membrane. Its function is as follows. Accessory subunit of the mitochondrial membrane respiratory chain NADH dehydrogenase (Complex I), that is believed not to be involved in catalysis. Complex I functions in the transfer of electrons from NADH to the respiratory chain. The immediate electron acceptor for the enzyme is believed to be ubiquinone. The chain is NADH dehydrogenase [ubiquinone] 1 alpha subcomplex subunit 11 (NDUFA11) from Homo sapiens (Human).